A 126-amino-acid chain; its full sequence is Gene 82 protein (126 aa).

This chain is Gene 82 protein (82), found in Mycobacterium phage L5 (Mycobacteriophage L5).